We begin with the raw amino-acid sequence, 92 residues long: Large ribosomal subunit protein bL25 (92 aa).

The protein belongs to the bacterial ribosomal protein bL25 family. As to quaternary structure, part of the 50S ribosomal subunit; part of the 5S rRNA/L5/L18/L25 subcomplex. Contacts the 5S rRNA. Binds to the 5S rRNA independently of L5 and L18.

Its function is as follows. This is one of the proteins that binds to the 5S RNA in the ribosome where it forms part of the central protuberance. The sequence is that of Large ribosomal subunit protein bL25 from Aliivibrio fischeri (strain MJ11) (Vibrio fischeri).